A 229-amino-acid polypeptide reads, in one-letter code: Ras-related protein rab-39 (229 aa).

Position 73–77 (73–77) interacts with GTP; the sequence is DTAGQ. Residues cysteine 227 and cysteine 229 are each lipidated (S-geranylgeranyl cysteine). Cysteine 229 carries the cysteine methyl ester modification.

This sequence belongs to the small GTPase superfamily. Rab family. As to quaternary structure, interacts (in GTP-bound form) with Ras association domain-containing protein rsf-1.

The protein resides in the cell membrane. It localises to the cytoplasmic vesicle membrane. The protein localises to the golgi apparatus. Small GTPases Rab involved in autophagy. The small GTPases Rab are key regulators of intracellular membrane trafficking, from the formation of transport vesicles to their fusion with membranes. Rabs cycle between an inactive GDP-bound form and an active GTP-bound form that is able to recruit to membranes different sets of downstream effectors directly responsible for vesicle formation, movement, tethering and fusion. Involved in positively regulating the oxidative stress response, perhaps in concert with the Ras association domain-containing protein rsf-1. This is Ras-related protein rab-39 from Caenorhabditis elegans.